We begin with the raw amino-acid sequence, 445 residues long: Mitochondrial-processing peptidase subunit alpha-2 (445 aa).

Residues 1–13 (MIGRFIARNYTTS) constitute a mitochondrion transit peptide.

The protein belongs to the peptidase M16 family. As to quaternary structure, heterodimer of alpha and beta subunits, forming the mitochondrial processing protease (MPP) in which subunit alpha is involved in substrate recognition and binding and subunit beta is the catalytic subunit.

The protein resides in the mitochondrion matrix. Functionally, substrate recognition and binding subunit of the essential mitochondrial processing protease (MPP), which cleaves the mitochondrial sequence off newly imported precursors proteins. The polypeptide is Mitochondrial-processing peptidase subunit alpha-2 (mppA2) (Dictyostelium discoideum (Social amoeba)).